The sequence spans 150 residues: 3-hydroxyacyl-[acyl-carrier-protein] dehydratase FabZ (150 aa).

His-54 is a catalytic residue.

Belongs to the thioester dehydratase family. FabZ subfamily.

The protein resides in the cytoplasm. It catalyses the reaction a (3R)-hydroxyacyl-[ACP] = a (2E)-enoyl-[ACP] + H2O. Involved in unsaturated fatty acids biosynthesis. Catalyzes the dehydration of short chain beta-hydroxyacyl-ACPs and long chain saturated and unsaturated beta-hydroxyacyl-ACPs. The protein is 3-hydroxyacyl-[acyl-carrier-protein] dehydratase FabZ of Vibrio vulnificus (strain CMCP6).